The following is a 163-amino-acid chain: tRNA-acetylating toxin 2 (163 aa).

The active site involves Y137.

The protein belongs to the acetyltransferase family. GNAT subfamily. In terms of assembly, homodimer. Forms a complex with cognate antitoxin TacA2.

It carries out the reaction glycyl-tRNA(Gly) + acetyl-CoA = N-acetylglycyl-tRNA(Gly) + CoA + H(+). The enzyme catalyses L-isoleucyl-tRNA(Ile) + acetyl-CoA = N-acetyl-L-isoleucyl-tRNA(Ile) + CoA + H(+). The catalysed reaction is L-leucyl-tRNA(Leu) + acetyl-CoA = N-acetyl-L-leucyl-tRNA(Leu) + CoA + H(+). Its function is as follows. Toxic component of a type II toxin-antitoxin (TA) system. Acetylates tRNA and inhibits translation. Acetylates mainly Gly and Ile/Leu in vitro. Overexpression during the lag phase of a tacA2-tacT2 deletion strain leads to a 100-fold increase in persister cells in the presence of cefotaxime and a non-growth state in the absence of antibiotic. This protein, which has a single amino acid compared to S.typhimurium strain 14028s (Lys-29 is Glu in 14028s), produces 100-fold more persister cells, has much higher acetylation activity and binds tRNA much better. Persister cell formation and the growth defect are neutralized by cognate antitoxin TacA2. Functionally, the TacA2-TacT2 complex both represses and derepresses expression of its own operon. The sequence is that of tRNA-acetylating toxin 2 from Salmonella enteritidis.